The following is a 698-amino-acid chain: Protein CRAC (698 aa).

The PH domain maps to 22-122 (DVSYSSIMKK…FLTLLIARIR (101 aa)). A disordered region spans residues 594-630 (TGGGSVPSSQSTNNLQSSTSSMSSLSSSSTSTTKRSH). Low complexity predominate over residues 601–626 (SSQSTNNLQSSTSSMSSLSSSSTSTT).

The protein resides in the cytoplasm. Couples activated G protein to adenylyl cyclase signal transduction from surface cAMP receptor. Pianissimo a cytosolic regulator and CRAC, are both essential for activation of the enzyme adenylyl cyclase. Pianissimo and CRAC do not function redundantly. Both proteins are integral components of the adenylyl cyclase activation pathway. The polypeptide is Protein CRAC (dagA) (Dictyostelium discoideum (Social amoeba)).